Reading from the N-terminus, the 400-residue chain is Imidazolonepropionase (400 aa).

Histidine 70 and histidine 72 together coordinate Fe(3+). Zn(2+) is bound by residues histidine 70 and histidine 72. Arginine 79, tyrosine 142, and histidine 175 together coordinate 4-imidazolone-5-propanoate. Tyrosine 142 lines the N-formimidoyl-L-glutamate pocket. Histidine 239 is a binding site for Fe(3+). Position 239 (histidine 239) interacts with Zn(2+). Residue glutamine 242 coordinates 4-imidazolone-5-propanoate. Residue aspartate 314 coordinates Fe(3+). Residue aspartate 314 coordinates Zn(2+). N-formimidoyl-L-glutamate-binding residues include asparagine 316 and glycine 318. Position 319 (threonine 319) interacts with 4-imidazolone-5-propanoate.

Belongs to the metallo-dependent hydrolases superfamily. HutI family. Zn(2+) serves as cofactor. Requires Fe(3+) as cofactor.

It is found in the cytoplasm. The catalysed reaction is 4-imidazolone-5-propanoate + H2O = N-formimidoyl-L-glutamate. It participates in amino-acid degradation; L-histidine degradation into L-glutamate; N-formimidoyl-L-glutamate from L-histidine: step 3/3. Functionally, catalyzes the hydrolytic cleavage of the carbon-nitrogen bond in imidazolone-5-propanoate to yield N-formimidoyl-L-glutamate. It is the third step in the universal histidine degradation pathway. The protein is Imidazolonepropionase of Methylobacterium sp. (strain 4-46).